The chain runs to 655 residues: ATP-dependent RNA helicase mss116, mitochondrial (655 aa).

A mitochondrion-targeting transit peptide spans 1–56; sequence MMLGAVRRYGVVHALRASVPRTICRPSNSQLLRCQTSPVTACPQSVRLLHKSSPFF. The Q motif motif lies at 84–113; the sequence is DLAERGLVDPKIIRAIVKDMNIKTMTDVQS. Residues 116-307 form the Helicase ATP-binding domain; it reads LREILQGDDV…RKTMKPNFKF (192 aa). 129 to 136 provides a ligand contact to ATP; it reads AKTGTGKT. The short motif at 251 to 254 is the DEAD box element; the sequence is DEAD. The Helicase C-terminal domain occupies 341 to 503; that stretch reads EFVTKYVEGE…TFATATVDMT (163 aa). A disordered region spans residues 594-642; that stretch reads YRGSSDNMSTRPDYRGGDRDMWASNSRRGREFNSDRRESRFGNHRNADD. Composition is skewed to basic and acidic residues over residues 605-614 and 621-642; these read PDYRGGDRDM and RGREFNSDRRESRFGNHRNADD.

The protein belongs to the DEAD box helicase family. DDX18/HAS1 subfamily.

The protein localises to the mitochondrion matrix. It carries out the reaction ATP + H2O = ADP + phosphate + H(+). Functionally, ATP-dependent RNA helicase required for mitochondrial splicing of group I and II introns. Also required for efficient mitochondrial translation. In Aspergillus fumigatus (strain ATCC MYA-4609 / CBS 101355 / FGSC A1100 / Af293) (Neosartorya fumigata), this protein is ATP-dependent RNA helicase mss116, mitochondrial (mss116).